The following is a 195-amino-acid chain: dITP/XTP pyrophosphatase (195 aa).

Substrate is bound at residue 8-13 (SNNQGK). Positions 39 and 68 each coordinate Mg(2+). D68 serves as the catalytic Proton acceptor. Substrate-binding positions include S69, 149–152 (FGYD), K172, and 177–178 (HR).

It belongs to the HAM1 NTPase family. In terms of assembly, homodimer. Requires Mg(2+) as cofactor.

The enzyme catalyses XTP + H2O = XMP + diphosphate + H(+). The catalysed reaction is dITP + H2O = dIMP + diphosphate + H(+). It carries out the reaction ITP + H2O = IMP + diphosphate + H(+). In terms of biological role, pyrophosphatase that catalyzes the hydrolysis of nucleoside triphosphates to their monophosphate derivatives, with a high preference for the non-canonical purine nucleotides XTP (xanthosine triphosphate), dITP (deoxyinosine triphosphate) and ITP. Seems to function as a house-cleaning enzyme that removes non-canonical purine nucleotides from the nucleotide pool, thus preventing their incorporation into DNA/RNA and avoiding chromosomal lesions. The sequence is that of dITP/XTP pyrophosphatase from Staphylococcus aureus (strain MRSA252).